The sequence spans 359 residues: MRVLVAMSGGVDSSVAAARMVDAGHDVVGVHLALSATPGTLRTGSRGCCSKEDAGDARRVADVLDIPFYVWDFADRFKEDVIDDFVASYERGETPNPCVRCNEKIKFSALAGRALALGFDALATGHYARLSDGRLRRAVDADKDQSYVLAVLTAQQLRHAVFPIGDTPKAQIRAEAAERGLAVADKPDSHDICFIPSGDTRAFLGARIGVRRGAVVDAGGTKLAEHEGVHGFTIGQRKGLGIAGPGPDGQPRYVTGIDAATGTVRVGGAEDLDVWRLTGERPVFTSGAAFGGPVECQVQVRAHGGLADAVASHDAGVLSVELRAPLRGVAAGQTMVIYRPDPEGDEVLASATISGADGR.

ATP is bound by residues 6-13 (AMSGGVDS) and leucine 32. The active-site Nucleophile is the cysteine 101. A disulfide bridge connects residues cysteine 101 and cysteine 193. Glycine 125 provides a ligand contact to ATP. Positions 143–145 (KDQ) are interaction with tRNA. Cysteine 193 functions as the Cysteine persulfide intermediate in the catalytic mechanism.

The protein belongs to the MnmA/TRMU family.

It is found in the cytoplasm. The enzyme catalyses S-sulfanyl-L-cysteinyl-[protein] + uridine(34) in tRNA + AH2 + ATP = 2-thiouridine(34) in tRNA + L-cysteinyl-[protein] + A + AMP + diphosphate + H(+). In terms of biological role, catalyzes the 2-thiolation of uridine at the wobble position (U34) of tRNA, leading to the formation of s(2)U34. In Mycobacterium sp. (strain KMS), this protein is tRNA-specific 2-thiouridylase MnmA.